Reading from the N-terminus, the 357-residue chain is Glutamine synthetase root isozyme A (357 aa).

The GS beta-grasp domain maps to 19 to 99 (IIAEYIWVGG…VICDVYTPAG (81 aa)). Residues 106–357 (KRYNAAKIFS…AETTILWKKP (252 aa)) form the GS catalytic domain.

The protein belongs to the glutamine synthetase family. Homooctamer.

Its subcellular location is the cytoplasm. The enzyme catalyses L-glutamate + NH4(+) + ATP = L-glutamine + ADP + phosphate + H(+). This chain is Glutamine synthetase root isozyme A (GS3A), found in Pisum sativum (Garden pea).